A 358-amino-acid chain; its full sequence is Leukotriene B4 receptor 2 (358 aa).

Over 1–24 the chain is Extracellular; it reads MSVCYRPPGNETLLSWKTSRATGT. A glycan (N-linked (GlcNAc...) asparagine) is linked at Asn10. Residues 25–45 form a helical membrane-spanning segment; sequence AFLLLAALLGLPGNGFVVWSL. Residues 46–60 lie on the Cytoplasmic side of the membrane; it reads AGWRPARGRPLAATL. Residues 61–81 traverse the membrane as a helical segment; it reads VLHLALADGAVLLLTPLFVAF. The Extracellular portion of the chain corresponds to 82-96; it reads LTRQAWPLGQAGCKA. A helical transmembrane segment spans residues 97 to 117; sequence VYYVCALSMYASVLLTGLLSL. At 118–140 the chain is on the cytoplasmic side; it reads QRCLAVTRPFLAPRLRSPALARR. A helical membrane pass occupies residues 141–161; sequence LLLAVWLAALLLAVPAAVYRH. At 162–185 the chain is on the extracellular side; the sequence is LWRDRVCQLCHPSPVHAAAHLSLE. A helical transmembrane segment spans residues 186-206; the sequence is TLTAFVLPFGLMLGCYSVTLA. The Cytoplasmic segment spans residues 207 to 224; it reads RLRGARWGSGRHGARVGR. A helical transmembrane segment spans residues 225–245; the sequence is LVSAIVLAFGLLWAPYHAVNL. Residues 246–275 are Extracellular-facing; that stretch reads LQAVAALAPPEGALAKLGGAGQAARAGTTA. A helical transmembrane segment spans residues 276–296; the sequence is LAFFSSSVNPVLYVFTAGDLL. At 297-358 the chain is on the cytoplasmic side; it reads PRAGPRFLTR…MEKDGPEWDL (62 aa). Residues 311–358 form a disordered region; sequence SGEARGGGRSREGTMELRTTPQLKVVGQGRGNGDPGGGMEKDGPEWDL. Gly residues predominate over residues 338-348; it reads QGRGNGDPGGG. A compositionally biased stretch (basic and acidic residues) spans 349-358; the sequence is MEKDGPEWDL.

The protein belongs to the G-protein coupled receptor 1 family. Widely expressed.

Its subcellular location is the cell membrane. In terms of biological role, low-affinity receptor for leukotrienes including leukotriene B4. Mediates chemotaxis of granulocytes and macrophages. The response is mediated via G-proteins that activate a phosphatidylinositol-calcium second messenger system. The rank order of affinities for the leukotrienes is LTB4 &gt; 12-epi-LTB4 &gt; LTB5 &gt; LTB3. The chain is Leukotriene B4 receptor 2 (LTB4R2) from Homo sapiens (Human).